The chain runs to 461 residues: Asparagine--tRNA ligase (461 aa).

This sequence belongs to the class-II aminoacyl-tRNA synthetase family. In terms of assembly, homodimer.

The protein localises to the cytoplasm. It carries out the reaction tRNA(Asn) + L-asparagine + ATP = L-asparaginyl-tRNA(Asn) + AMP + diphosphate + H(+). The sequence is that of Asparagine--tRNA ligase from Oleidesulfovibrio alaskensis (strain ATCC BAA-1058 / DSM 17464 / G20) (Desulfovibrio alaskensis).